The sequence spans 683 residues: Cysteine-rich receptor-like protein kinase 28 (683 aa).

Residues 1–24 form the signal peptide; it reads MEHVRVIFFFFACVLKIVPFICLA. Over 25 to 288 the chain is Extracellular; it reads QKDKYEFPPG…RTGKGKGGSK (264 aa). 2 consecutive Gnk2-homologous domains span residues 32-136 and 142-251; these read PPGF…NMII and TTPT…TWRF. N-linked (GlcNAc...) asparagine glycans are attached at residues Asn43, Asn47, Asn73, and Asn153. Residues 263 to 283 form a disordered region; it reads PAIQPADSPTSAARTERTGKG. A helical transmembrane segment spans residues 289–309; that stretch reads VIVAIVIPIVFVALFAICLCL. The Cytoplasmic portion of the chain corresponds to 310-683; it reads LLKWKKNKSV…DVTVSELSPR (374 aa). A Protein kinase domain is found at 361-641; the sequence is FSPENELGRG…ALMLNSYSYT (281 aa). Residues 367 to 375 and Lys389 contribute to the ATP site; that span reads LGRGGFGSV. Tyr434 carries the phosphotyrosine modification. Asp486 (proton acceptor) is an active-site residue. Residue Ser490 is modified to Phosphoserine. Residue Thr528 is modified to Phosphothreonine. Tyr536 carries the post-translational modification Phosphotyrosine.

Belongs to the protein kinase superfamily. Ser/Thr protein kinase family. CRK subfamily.

It localises to the membrane. It catalyses the reaction L-seryl-[protein] + ATP = O-phospho-L-seryl-[protein] + ADP + H(+). The enzyme catalyses L-threonyl-[protein] + ATP = O-phospho-L-threonyl-[protein] + ADP + H(+). The polypeptide is Cysteine-rich receptor-like protein kinase 28 (CRK28) (Arabidopsis thaliana (Mouse-ear cress)).